The sequence spans 65 residues: Large ribosomal subunit protein bL35 (65 aa).

This sequence belongs to the bacterial ribosomal protein bL35 family.

The sequence is that of Large ribosomal subunit protein bL35 from Aliarcobacter butzleri (strain RM4018) (Arcobacter butzleri).